Reading from the N-terminus, the 1418-residue chain is ABC transporter G family member 38 (1418 aa).

Residues 1–27 (MAHYRVSSEVENIMNRDRSHRKNEEED) form a disordered region. Residues 147 to 419 (TKIRVLPDRK…FEFMGFKCPE (273 aa)) enclose the ABC transporter 1 domain. 179–186 (GPPGSGKS) serves as a coordination point for ATP. In terms of domain architecture, ABC transmembrane type-2 1 spans 497 to 710 (ELLKACLERE…IQTAVSVNEF (214 aa)). Helical transmembrane passes span 516–536 (TFVLKSLQLIINAILIGVVFW), 548–568 (GIIYMGAIYLEVQMIVFSGFF), 600–620 (IITFPLSFVEVFIVVLITYFT), 634–654 (YLVLALCGQMSYGLFRCIAAV), 659–679 (VVSNTMGCLAVMWLMTFSGYV), and 729–749 (FFVETYWYWIGLLALILSTIL). The region spanning 821 to 1073 (MTFENITYSV…QLIEYFEGIR (253 aa)) is the ABC transporter 2 domain. An ATP-binding site is contributed by 866–873 (GVSGAGKT). One can recognise an ABC transmembrane type-2 2 domain in the interval 1146–1360 (SQFQACLWKQ…GLYGLTIAQY (215 aa)). 7 helical membrane passes run 1167 to 1187 (AVRFSFGAAVGIMYGIIFWSL), 1197 to 1217 (IFNSVGAMSTVVGFLSSQSAA), 1249 to 1269 (VIIEIPYTMAQACIYGVIVYG), 1284 to 1304 (IFFTFISILYSIYTGIMVISV), 1310 to 1330 (IASILNGVISTSWNVFSGFTI), 1341 to 1361 (WFTYVCPGWWGLYGLTIAQYG), and 1387 to 1407 (FLWVVSLTLIAFSMFFVFIYA).

Belongs to the ABC transporter superfamily. ABCG family. PDR (TC 3.A.1.205) subfamily. Expressed in roots and siliques at low levels.

Its subcellular location is the membrane. In terms of biological role, may be a general defense protein. This Arabidopsis thaliana (Mouse-ear cress) protein is ABC transporter G family member 38 (ABCG38).